Consider the following 298-residue polypeptide: Replication protein A 32 kDa subunit B (298 aa).

The OB DNA-binding region spans 89 to 163 (VRLVGRMLNK…QVVAYSVRRI (75 aa)).

It belongs to the replication factor A protein 2 family. In terms of assembly, heterotrimer of RPA1, RPA2 and RPA3 (canonical replication protein A complex). Interacts with RPA1A and RPA3. Phosphorylated in a cell-cycle-dependent manner (from the S phase until mitosis). In response to DNA damage, recruited to DNA-repair nuclear foci, as a hypophosphorylated form.

It is found in the nucleus. Functionally, component of the replication protein A complex (RPA) required for DNA recombination, repair and replication. The activity of RPA is mediated by single-stranded DNA binding and protein interactions. The chain is Replication protein A 32 kDa subunit B (RPA2B) from Oryza sativa subsp. japonica (Rice).